Consider the following 81-residue polypeptide: X antigen family member 1 (81 aa).

A Glycyl lysine isopeptide (Lys-Gly) (interchain with G-Cter in SUMO2) cross-link involves residue K12. Residue S20 is modified to Phosphoserine. Glycyl lysine isopeptide (Lys-Gly) (interchain with G-Cter in SUMO2) cross-links involve residues K61 and K65.

The protein belongs to the GAGE family. In terms of tissue distribution, in normal tissues, highly expressed in testis. Expressed also in many different types of cancers: highly expressed in breast cancer, prostate cancer and many types of lung cancers, including squamous cell carcinoma, small cell carcinoma, non-small cell carcinoma, and adenocarcinoma, as well as in Ewing's cell lines, in some Ewing's sarcoma patient samples, and in one of one alveolar rhabdomyosarcoma patient sample.

This Homo sapiens (Human) protein is X antigen family member 1.